Here is a 392-residue protein sequence, read N- to C-terminus: Imidazolonepropionase (392 aa).

Fe(3+) contacts are provided by His-69 and His-71. Residues His-69 and His-71 each coordinate Zn(2+). Arg-78, Tyr-136, and His-163 together coordinate 4-imidazolone-5-propanoate. Residue Tyr-136 coordinates N-formimidoyl-L-glutamate. His-226 contacts Fe(3+). His-226 provides a ligand contact to Zn(2+). Gln-229 provides a ligand contact to 4-imidazolone-5-propanoate. A Fe(3+)-binding site is contributed by Asp-302. Asp-302 contacts Zn(2+). The N-formimidoyl-L-glutamate site is built by Asn-304 and Gly-306. Ser-307 is a 4-imidazolone-5-propanoate binding site.

Belongs to the metallo-dependent hydrolases superfamily. HutI family. Zn(2+) serves as cofactor. Requires Fe(3+) as cofactor.

The protein resides in the cytoplasm. It catalyses the reaction 4-imidazolone-5-propanoate + H2O = N-formimidoyl-L-glutamate. Its pathway is amino-acid degradation; L-histidine degradation into L-glutamate; N-formimidoyl-L-glutamate from L-histidine: step 3/3. In terms of biological role, catalyzes the hydrolytic cleavage of the carbon-nitrogen bond in imidazolone-5-propanoate to yield N-formimidoyl-L-glutamate. It is the third step in the universal histidine degradation pathway. This chain is Imidazolonepropionase, found in Salinispora tropica (strain ATCC BAA-916 / DSM 44818 / JCM 13857 / NBRC 105044 / CNB-440).